Here is a 100-residue protein sequence, read N- to C-terminus: Urease subunit gamma (100 aa).

It belongs to the urease gamma subunit family. As to quaternary structure, heterotrimer of UreA (gamma), UreB (beta) and UreC (alpha) subunits. Three heterotrimers associate to form the active enzyme.

It is found in the cytoplasm. The catalysed reaction is urea + 2 H2O + H(+) = hydrogencarbonate + 2 NH4(+). It functions in the pathway nitrogen metabolism; urea degradation; CO(2) and NH(3) from urea (urease route): step 1/1. The chain is Urease subunit gamma from Opitutus terrae (strain DSM 11246 / JCM 15787 / PB90-1).